Consider the following 339-residue polypeptide: MAAMAAKLHISTKSDQSNVRLPRLINLSRDPTARVLFPRNGSVSSLHTNFSSPNIMVPCAGGGGGGSIGNHGGGSGSGGGGGGYGGSEEEESSPWGPLGLFIQGWRSRVAADSQFPFKVLMEMLVGVSANVLGDMASRPNFGLNELDFVFSTLVVGSILNFTLMYLLAPSAISHGSSNLLPGIFRSCPSSHMFEQGNFTLMNRFGTLVYKGMVFATVGLAAGLVGTAISNGLIMLRKKIDPSFETPNKPPPTLLNSLTWATHMGVSANVRYQTLNGAEFLLEKSLPPLVFKTSVIALRVVNNVLGGMSFVTLARMTGSQSVEEEKKIEMSEISEKEKED.

A chloroplast-targeting transit peptide spans 1 to 58 (MAAMAAKLHISTKSDQSNVRLPRLINLSRDPTARVLFPRNGSVSSLHTNFSSPNIMVP). Gly residues predominate over residues 68 to 86 (IGNHGGGSGSGGGGGGYGG). The disordered stretch occupies residues 68-92 (IGNHGGGSGSGGGGGGYGGSEEEES). 2 helical membrane-spanning segments follow: residues 148–168 (FVFS…YLLA) and 213–233 (VFAT…NGLI).

This sequence belongs to the RETICULATA family.

It localises to the plastid. Its subcellular location is the chloroplast membrane. Functionally, may play a role in leaf development. This is Protein RETICULATA-RELATED 2, chloroplastic from Arabidopsis thaliana (Mouse-ear cress).